The chain runs to 66 residues: Large ribosomal subunit protein bL33c (66 aa).

This sequence belongs to the bacterial ribosomal protein bL33 family.

It localises to the plastid. Its subcellular location is the chloroplast. This is Large ribosomal subunit protein bL33c from Barbarea verna (Land cress).